The sequence spans 288 residues: Bifunctional protein FolD (288 aa).

Residues 166 to 168 (GAS) and Ile232 each bind NADP(+).

The protein belongs to the tetrahydrofolate dehydrogenase/cyclohydrolase family. Homodimer.

It catalyses the reaction (6R)-5,10-methylene-5,6,7,8-tetrahydrofolate + NADP(+) = (6R)-5,10-methenyltetrahydrofolate + NADPH. It carries out the reaction (6R)-5,10-methenyltetrahydrofolate + H2O = (6R)-10-formyltetrahydrofolate + H(+). It participates in one-carbon metabolism; tetrahydrofolate interconversion. Its function is as follows. Catalyzes the oxidation of 5,10-methylenetetrahydrofolate to 5,10-methenyltetrahydrofolate and then the hydrolysis of 5,10-methenyltetrahydrofolate to 10-formyltetrahydrofolate. This is Bifunctional protein FolD from Escherichia coli O139:H28 (strain E24377A / ETEC).